The following is a 692-amino-acid chain: Potassium-transporting ATPase ATP-binding subunit (692 aa).

The next 4 helical transmembrane spans lie at 50–70, 77–97, 240–260, and 266–286; these read PIMF…FLPS, GWFN…ANFA, LTLI…YLGF, and VLVA…LSAI. Catalysis depends on aspartate 319, which acts as the 4-aspartylphosphate intermediate. Residues aspartate 356, glutamate 360, 388–395, and lysine 407 contribute to the ATP site; that span reads FKAETRMS. Mg(2+) is bound by residues aspartate 530 and aspartate 534. 3 consecutive transmembrane segments (helical) span residues 600 to 620, 628 to 648, and 672 to 692; these read FAII…LNIM, AILS…PLAM, and GGVI…GLFI.

Belongs to the cation transport ATPase (P-type) (TC 3.A.3) family. Type IA subfamily. As to quaternary structure, the system is composed of three essential subunits: KdpA, KdpB and KdpC.

Its subcellular location is the cell membrane. The enzyme catalyses K(+)(out) + ATP + H2O = K(+)(in) + ADP + phosphate + H(+). In terms of biological role, part of the high-affinity ATP-driven potassium transport (or Kdp) system, which catalyzes the hydrolysis of ATP coupled with the electrogenic transport of potassium into the cytoplasm. This subunit is responsible for energy coupling to the transport system and for the release of the potassium ions to the cytoplasm. This chain is Potassium-transporting ATPase ATP-binding subunit, found in Bacillus cereus (strain 03BB102).